Consider the following 237-residue polypeptide: Proteasome subunit beta (237 aa).

Residues 1–27 (MSKFPDLPGMKNLDANPYEPELASFDD) are disordered. Positions 1–42 (MSKFPDLPGMKNLDANPYEPELASFDDMDADAGDGDAVAKTG) are cleaved as a propeptide — removed in mature form; by autocatalysis. T43 serves as the catalytic Nucleophile.

This sequence belongs to the peptidase T1B family. The 20S proteasome core is composed of 14 alpha and 14 beta subunits that assemble into four stacked heptameric rings, resulting in a barrel-shaped structure. The two inner rings, each composed of seven catalytic beta subunits, are sandwiched by two outer rings, each composed of seven alpha subunits. The catalytic chamber with the active sites is on the inside of the barrel. Has a gated structure, the ends of the cylinder being occluded by the N-termini of the alpha-subunits. Is capped at one or both ends by the proteasome regulatory ATPase, PAN.

Its subcellular location is the cytoplasm. The catalysed reaction is Cleavage of peptide bonds with very broad specificity.. With respect to regulation, the formation of the proteasomal ATPase PAN-20S proteasome complex, via the docking of the C-termini of PAN into the intersubunit pockets in the alpha-rings, triggers opening of the gate for substrate entry. Interconversion between the open-gate and close-gate conformations leads to a dynamic regulation of the 20S proteasome proteolysis activity. In terms of biological role, component of the proteasome core, a large protease complex with broad specificity involved in protein degradation. This chain is Proteasome subunit beta, found in Halomicrobium mukohataei (strain ATCC 700874 / DSM 12286 / JCM 9738 / NCIMB 13541) (Haloarcula mukohataei).